The primary structure comprises 266 residues: Pyrrolizixenacetamide deacetylase (266 aa).

Threonine 28 provides a ligand contact to acetate. Serine 94 serves as the catalytic Nucleophile. Residue leucine 95 participates in acetate binding. Catalysis depends on charge relay system residues aspartate 215 and histidine 242. Residue histidine 242 coordinates acetate.

Belongs to the AB hydrolase superfamily. In terms of assembly, homodimer.

The enzyme catalyses pyrrolizixenacetamide + H2O = 3-amino-5,6,7,7a-tetrahydro-1H-pyrrolizin-1-one + acetate + H(+). Involved in the biosynthetic pathway of pyrrolizwilline, a pyrrolizidine alkaloid. Catalyzes the N-deacetylation of pyrrolizixenacetamide. This chain is Pyrrolizixenacetamide deacetylase, found in Xenorhabdus hominickii.